We begin with the raw amino-acid sequence, 1958 residues long: Callose synthase 7 (1958 aa).

The disordered stretch occupies residues 1–29 (MASTSSGGRGEDGRPPQMQPVRSMSRKMT). Residues 1–504 (MASTSSGGRG…LYRSFDRMWM (504 aa)) lie on the Cytoplasmic side of the membrane. The chain crosses the membrane as a helical span at residues 505 to 525 (FLVLSLQTMIIVAWHPSGSIL). Residues 526–535 (AIFTEDVFRN) lie on the Extracellular side of the membrane. A helical transmembrane segment spans residues 536–556 (VLTIFITSAFLNLLQATLDLV). Topologically, residues 557 to 569 (LSFGAWKSLKFSQ) are cytoplasmic. The chain crosses the membrane as a helical span at residues 570–590 (IMRYITKFLMAAMWAIMLPIT). Over 591-620 (YSKSVQNPTGLIKFFSSWVGSWLHRSLYDY) the chain is Extracellular. Residues 621 to 641 (AIALYVLPNILAAVFFLLPPL) traverse the membrane as a helical segment. Residues 642–673 (RRIMERSNMRIVTLIMWWAQPKLYIGRGMHEE) are Cytoplasmic-facing. A helical transmembrane segment spans residues 674 to 694 (MFALFKYTFFWVMLLLSKLAF). Residues 695–730 (SYYVEILPLVNPTKLIWDMHVVNYEWHEFFPNATHN) are Extracellular-facing. The chain crosses the membrane as a helical span at residues 731-751 (IGVIIAIWGPIVLVYFMDTQI). The Cytoplasmic segment spans residues 752–1496 (WYAIFSTLFG…FDFYRMLSFY (745 aa)). A helical transmembrane segment spans residues 1497–1517 (FTTVGFYFSSMITVLTVYVFL). Residues 1518-1547 (YGRLYLVLSGLEKNILQSASVHESNALEQA) are Extracellular-facing. Residues 1548 to 1568 (LAAQSVFQLGFLMVLPMVMEI) traverse the membrane as a helical segment. Over 1569-1576 (GLEKGFRT) the chain is Cytoplasmic. The chain crosses the membrane as a helical span at residues 1577 to 1597 (ALGDFIIMQLQLASVFFTFQL). Over 1598–1640 (GTKAHYFGRTILHGGSKYRATGRGFVVFHAKFAENYRLYSRSH) the chain is Extracellular. A helical transmembrane segment spans residues 1641–1661 (FVKGLELVILLVVYQVYGTSY). At 1662-1667 (RSSSTY) the chain is on the cytoplasmic side. The helical transmembrane segment at 1668-1688 (MYITFSMWFLVTSWLFAPFIF) threads the bilayer. The Extracellular portion of the chain corresponds to 1689–1742 (NPSGFEWQKTVDDWTDWKRWMGNRGGIGIVLDKSWESWWDIEQEHLKHTNLRGR). A helical membrane pass occupies residues 1743 to 1763 (VLEILLALRFLLYQYGIVYHL). Residues 1764–1771 (NIARRHTT) are Cytoplasmic-facing. A helical transmembrane segment spans residues 1772-1792 (FLVYGLSWAILLSVLLVLKMV). Topologically, residues 1793–1812 (SMGRRKFGTDFQVMFRILKA) are extracellular. The helical transmembrane segment at 1813 to 1833 (LLFLGFLSVMTVLFVVCGLTI) threads the bilayer. Topologically, residues 1834-1835 (SD) are cytoplasmic. The helical transmembrane segment at 1836–1856 (LFASILAFLPTGWAILLIGQA) threads the bilayer. Residues 1857 to 1878 (LRSVFKGLGFWDSVKELGRAYE) are Extracellular-facing. Residues 1879-1899 (YIMGLVIFTPIAVLSWFPFVS) form a helical membrane-spanning segment. Topologically, residues 1900 to 1958 (EFQTRLLFNQAFSRGLQISMILAGKKDKETPSTKYLGHTEESFGLEHDTNTFNHYYLWT) are cytoplasmic.

The protein belongs to the glycosyltransferase 48 family.

Its subcellular location is the cell membrane. It catalyses the reaction [(1-&gt;3)-beta-D-glucosyl](n) + UDP-alpha-D-glucose = [(1-&gt;3)-beta-D-glucosyl](n+1) + UDP + H(+). In terms of biological role, involved in callose synthesis at the forming cell plate during cytokinesis. During plant growth and development, callose is found as a transitory component of the cell plate in dividing cells, is a major component of pollen mother cell walls and pollen tubes, and is found as a structural component of plasmodesmatal canals. This Arabidopsis thaliana (Mouse-ear cress) protein is Callose synthase 7 (CALS7).